A 689-amino-acid chain; its full sequence is Glycine--tRNA ligase beta subunit (689 aa).

It belongs to the class-II aminoacyl-tRNA synthetase family. Tetramer of two alpha and two beta subunits.

It localises to the cytoplasm. The enzyme catalyses tRNA(Gly) + glycine + ATP = glycyl-tRNA(Gly) + AMP + diphosphate. The chain is Glycine--tRNA ligase beta subunit from Sodalis glossinidius (strain morsitans).